The following is a 634-amino-acid chain: Kelch-like protein 22 (634 aa).

Ala-2 carries the N-acetylalanine modification. The BTB domain occupies 50–117 (FDVVLVVEGK…IYTSELELSL (68 aa)). Kelch repeat units follow at residues 299 to 349 (CVVG…VLNN), 350 to 399 (FVYL…VVGK), 400 to 446 (YIYA…TLQG), 448 to 493 (MYIT…ALLD), 495 to 544 (LFVI…VLDS), and 545 to 593 (RIYV…VLTL). At Thr-463 the chain carries Phosphothreonine. Tyr-466 bears the Phosphotyrosine mark. At Thr-475 the chain carries Phosphothreonine. The segment at 600–634 (EQPRGTPNRSQADADFASEVMSVSDWEEFDNSSED) is disordered. Thr-605 carries the phosphothreonine modification. The segment covering 624-634 (DWEEFDNSSED) has biased composition (acidic residues).

Component of the BCR(KLHL22) E3 ubiquitin ligase complex, at least composed of CUL3, KLHL22 and RBX1. Interacts with PLK1. Interacts with DEPDC5 (via DEP domain); the interaction depends on amino acid availability. Interacts with YWHAE; required for the nuclear localization of KLHL22 upon amino acid starvation.

It localises to the cytoplasm. The protein resides in the cytosol. It is found in the cytoskeleton. Its subcellular location is the microtubule organizing center. The protein localises to the centrosome. It localises to the spindle. The protein resides in the nucleus. It is found in the lysosome. Its pathway is protein modification; protein ubiquitination. In terms of biological role, substrate-specific adapter of a BCR (BTB-CUL3-RBX1) E3 ubiquitin ligase complex required for chromosome alignment and localization of PLK1 at kinetochores. The BCR(KLHL22) ubiquitin ligase complex mediates monoubiquitination of PLK1, leading to PLK1 dissociation from phosphoreceptor proteins and subsequent removal from kinetochores, allowing silencing of the spindle assembly checkpoint (SAC) and chromosome segregation. Monoubiquitination of PLK1 does not lead to PLK1 degradation. The BCR(KLHL22) ubiquitin ligase complex is also responsible for the amino acid-stimulated 'Lys-48' polyubiquitination and proteasomal degradation of DEPDC5. Through the degradation of DEPDC5, releases the GATOR1 complex-mediated inhibition of the TORC1 pathway. It is therefore an amino acid-dependent activator within the amino acid-sensing branch of the TORC1 pathway, indirectly regulating different cellular processes including cell growth and autophagy. This is Kelch-like protein 22 from Mus musculus (Mouse).